The following is a 427-amino-acid chain: Flotillin-1 (427 aa).

A phosphoserine mark is found at Ser-19, Ser-163, and Ser-385. The residue at position 387 (Thr-387) is a Phosphothreonine.

Belongs to the band 7/mec-2 family. Flotillin subfamily. As to quaternary structure, heterooligomeric complex of flotillin-1 and flotillin-2 and caveolin-1 and caveolin-2. Interacts with ECPAS.

It localises to the cell membrane. The protein resides in the endosome. The protein localises to the membrane. Its subcellular location is the caveola. It is found in the melanosome. It localises to the membrane raft. Its function is as follows. May act as a scaffolding protein within caveolar membranes, functionally participating in formation of caveolae or caveolae-like vesicles. The chain is Flotillin-1 (FLOT1) from Pongo abelii (Sumatran orangutan).